Consider the following 143-residue polypeptide: Large ribosomal subunit protein uL11 (143 aa).

Belongs to the universal ribosomal protein uL11 family. In terms of assembly, part of the ribosomal stalk of the 50S ribosomal subunit. Interacts with L10 and the large rRNA to form the base of the stalk. L10 forms an elongated spine to which L12 dimers bind in a sequential fashion forming a multimeric L10(L12)X complex. In terms of processing, one or more lysine residues are methylated.

In terms of biological role, forms part of the ribosomal stalk which helps the ribosome interact with GTP-bound translation factors. The sequence is that of Large ribosomal subunit protein uL11 from Kocuria rhizophila (strain ATCC 9341 / DSM 348 / NBRC 103217 / DC2201).